Reading from the N-terminus, the 329-residue chain is MGESTTQPAGGAAVDDETRSAALPRWRGAAGRLEVWYATLSDPLTRTGLWVHCETVAPTTGGPYAHGWVTWFPPDAPPGTERFGPQPAQPAAGPAWFDIAGVRMAPAELTGRTRSLAWELSWKDTAAPLWTFPRVAWERELLPGAQVVIAPTAVFAGSLAVGETTHRVDSWRGSVAHIYGHGNAKRWGWIHADLGDGDVLEVVTAVSHKPGLRRLAPLAFVRFRIDGKDWPASPLPSLRMRTTLGVRHWQLEGRIGGREALIRVDQPPERCVSLGYTDPDGAKAVCTNTEQADIHIELGGRHWSVLGTGHAEVGLRGTAAPAIKEGTPA.

The interval 1-20 is disordered; that stretch reads MGESTTQPAGGAAVDDETRS.

This is an uncharacterized protein from Mycobacterium tuberculosis (strain CDC 1551 / Oshkosh).